A 226-amino-acid chain; its full sequence is Phosphoenolpyruvate guanylyltransferase (226 aa).

The phosphoenolpyruvate site is built by Thr-145, Gly-161, and Ser-164.

Belongs to the CofC family.

The catalysed reaction is phosphoenolpyruvate + GTP + H(+) = enolpyruvoyl-2-diphospho-5'-guanosine + diphosphate. The protein operates within cofactor biosynthesis; coenzyme F420 biosynthesis. Functionally, guanylyltransferase that catalyzes the activation of phosphoenolpyruvate (PEP) as enolpyruvoyl-2-diphospho-5'-guanosine, via the condensation of PEP with GTP. It is involved in the biosynthesis of coenzyme F420, a hydride carrier cofactor. This is Phosphoenolpyruvate guanylyltransferase from Nocardia farcinica (strain IFM 10152).